The sequence spans 229 residues: MAKKKAFIPFLYLASIVFLPWWISLSCNKSLKTWITNSWNTRQSETFLNDIQEKSLLEKFIQLEELFLLDEMIKEDPETHLQKLRIGIHKETIQFIQMYNEDRIHTILHFSTNILCFVILSGYSILGNEELLIINSWVQEFLYNLSDTIKAFSILLLTDLCIGFHSPHGWELMIGYIYKDFGFAHNDQIISGLVSTFPVILDTIFKYWIFRYLNRVSPSLVVIYHSIND.

3 consecutive transmembrane segments (helical) span residues 6-26 (AFIP…ISLS), 114-134 (ILCF…LLII), and 189-209 (IISG…KYWI).

Belongs to the CemA family.

It is found in the plastid. Its subcellular location is the chloroplast inner membrane. It carries out the reaction K(+)(in) + H(+)(out) = K(+)(out) + H(+)(in). Contributes to K(+)/H(+) antiport activity by supporting proton efflux to control proton extrusion and homeostasis in chloroplasts in a light-dependent manner to modulate photosynthesis. Prevents excessive induction of non-photochemical quenching (NPQ) under continuous-light conditions. Indirectly promotes efficient inorganic carbon uptake into chloroplasts. The chain is Potassium/proton antiporter CemA from Carica papaya (Papaya).